The primary structure comprises 140 residues: uncharacterized protein (140 aa).

This is an uncharacterized protein from Mycoplasma pneumoniae (strain ATCC 29342 / M129 / Subtype 1) (Mycoplasmoides pneumoniae).